The primary structure comprises 916 residues: Translation initiation factor IF-2 (916 aa).

Residues 151–191 are compositionally biased toward basic and acidic residues; sequence NLDEQQRLAESDRARDEAIQRKRDEEQAAKDRVEAERKAAE. 2 disordered regions span residues 151 to 262 and 280 to 328; these read NLDE…SHVM and HLSA…ERPT. 2 stretches are compositionally biased toward low complexity: residues 192–243 and 293–305; these read EAAA…ATPA and RGKPTGRPGSSSS. The tr-type G domain maps to 415–584; the sequence is SRPPVVTIMG…SLQAEVLELK (170 aa). Positions 424 to 431 are G1; the sequence is GHVDHGKT. 424 to 431 contacts GTP; sequence GHVDHGKT. Residues 449–453 are G2; that stretch reads GITQH. The G3 stretch occupies residues 470–473; that stretch reads DTPG. GTP contacts are provided by residues 470–474 and 524–527; these read DTPGH and NKID. A G4 region spans residues 524–527; it reads NKID. Residues 560-562 are G5; that stretch reads SAK.

The protein belongs to the TRAFAC class translation factor GTPase superfamily. Classic translation factor GTPase family. IF-2 subfamily.

Its subcellular location is the cytoplasm. Its function is as follows. One of the essential components for the initiation of protein synthesis. Protects formylmethionyl-tRNA from spontaneous hydrolysis and promotes its binding to the 30S ribosomal subunits. Also involved in the hydrolysis of GTP during the formation of the 70S ribosomal complex. The protein is Translation initiation factor IF-2 of Xanthomonas campestris pv. campestris (strain B100).